The primary structure comprises 522 residues: Amine oxidase [flavin-containing] (522 aa).

At 1–492 (MTANAYDVIV…WERNLPSVGG (492 aa)) the chain is on the cytoplasmic side. Residue cysteine 398 is modified to S-8alpha-FAD cysteine. A helical; Anchor for type IV membrane protein transmembrane segment spans residues 493-513 (FLKFMGVSSFLAAATAAGLVA). Topologically, residues 514 to 522 (CKKGLLPRC) are mitochondrial intermembrane.

This sequence belongs to the flavin monoamine oxidase family. Monomer, homo- or heterodimer (containing two subunits of similar size). Each subunit contains a covalently bound flavin. Enzymatically active as monomer. FAD serves as cofactor. Strongest expression in brain and intestine, followed by liver, heart and gill. Little expression in spleen, eye or muscle. In brain, highest activity in noradrenergic and serotonergic cell groups and those of the habenulointerpeduncular pathway; moderate levels in dopaminergic cell clusters.

It localises to the mitochondrion outer membrane. The catalysed reaction is a secondary aliphatic amine + O2 + H2O = a primary amine + an aldehyde + H2O2. It catalyses the reaction a primary methyl amine + O2 + H2O = an aldehyde + H2O2 + NH4(+). It carries out the reaction serotonin + O2 + H2O = (5-hydroxyindol-3-yl)acetaldehyde + H2O2 + NH4(+). The enzyme catalyses 2-phenylethylamine + O2 + H2O = 2-phenylacetaldehyde + H2O2 + NH4(+). The catalysed reaction is tyramine + O2 + H2O = (4-hydroxyphenyl)acetaldehyde + H2O2 + NH4(+). It catalyses the reaction dopamine + O2 + H2O = 3,4-dihydroxyphenylacetaldehyde + H2O2 + NH4(+). It carries out the reaction (R)-adrenaline + O2 + H2O = (R)-3,4-dihydroxymandelaldehyde + methylamine + H2O2. The enzyme catalyses (R)-noradrenaline + O2 + H2O = (R)-3,4-dihydroxymandelaldehyde + H2O2 + NH4(+). The catalysed reaction is kynuramine + O2 + H2O = 3-(2-aminophenyl)-3-oxopropanal + H2O2 + NH4(+). It catalyses the reaction tryptamine + O2 + H2O = indole-3-acetaldehyde + H2O2 + NH4(+). Its activity is regulated as follows. Inhibited by both clorgyline (selective MAOA inhibitor) and deprenyl (selective MAOB inhibitor). In terms of biological role, catalyzes the oxidative deamination of biogenic and xenobiotic amines and has important functions in the metabolism of neuroactive and vasoactive amines in the central nervous system and peripheral tissues. Preferentially oxidizes serotonin and tyramine. Also catalyzes the oxidative deamination of kynuramine to 3-(2-aminophenyl)-3-oxopropanal that can spontaneously condense to 4-hydroxyquinoline. The polypeptide is Amine oxidase [flavin-containing] (Danio rerio (Zebrafish)).